Consider the following 362-residue polypeptide: Malate dehydrogenase (362 aa).

Belongs to the LDH2/MDH2 oxidoreductase family. Homodimer.

It localises to the cytoplasm. It carries out the reaction (S)-malate + NAD(+) = oxaloacetate + NADH + H(+). This chain is Malate dehydrogenase (mdh), found in Pyrococcus abyssi (strain GE5 / Orsay).